The following is a 368-amino-acid chain: Nucleotide pyrophosphatase/phosphodiesterase (368 aa).

It belongs to the metallophosphoesterase superfamily. In terms of assembly, monomer and homomer. Post-translationally, glycosylated.

It is found in the plastid. It localises to the chloroplast. In terms of biological role, hydrolyzes pyrophosphate, phosphodiester and phosphosulfate linkages of nucleotide-sugars, sulfonucleotides and nucleoside di and triphosphates. Highest activity observed with the substrates ADP-glucose and adenosine 5'-phosphosulfate. In Hordeum vulgare (Barley), this protein is Nucleotide pyrophosphatase/phosphodiesterase.